A 410-amino-acid polypeptide reads, in one-letter code: Probable tRNA sulfurtransferase (410 aa).

The THUMP domain maps to 58–167 (AELTRRLQEV…RREIFVSVER (110 aa)). Residues 185 to 186 (LL), 210 to 211 (HF), arginine 267, glycine 289, and glutamine 298 each bind ATP.

Belongs to the ThiI family.

The protein localises to the cytoplasm. The catalysed reaction is [ThiI sulfur-carrier protein]-S-sulfanyl-L-cysteine + a uridine in tRNA + 2 reduced [2Fe-2S]-[ferredoxin] + ATP + H(+) = [ThiI sulfur-carrier protein]-L-cysteine + a 4-thiouridine in tRNA + 2 oxidized [2Fe-2S]-[ferredoxin] + AMP + diphosphate. It carries out the reaction [ThiS sulfur-carrier protein]-C-terminal Gly-Gly-AMP + S-sulfanyl-L-cysteinyl-[cysteine desulfurase] + AH2 = [ThiS sulfur-carrier protein]-C-terminal-Gly-aminoethanethioate + L-cysteinyl-[cysteine desulfurase] + A + AMP + 2 H(+). It participates in cofactor biosynthesis; thiamine diphosphate biosynthesis. Functionally, catalyzes the ATP-dependent transfer of a sulfur to tRNA to produce 4-thiouridine in position 8 of tRNAs, which functions as a near-UV photosensor. Also catalyzes the transfer of sulfur to the sulfur carrier protein ThiS, forming ThiS-thiocarboxylate. This is a step in the synthesis of thiazole, in the thiamine biosynthesis pathway. The sulfur is donated as persulfide by IscS. The sequence is that of Probable tRNA sulfurtransferase from Nocardia farcinica (strain IFM 10152).